Here is a 273-residue protein sequence, read N- to C-terminus: Dermonecrotic toxin LhSicTox-alphaIA2biii (273 aa).

His-5 is an active-site residue. Mg(2+) is bound by residues Glu-25 and Asp-27. His-41 serves as the catalytic Nucleophile. Disulfide bonds link Cys-45-Cys-51 and Cys-47-Cys-190. Asp-85 is a Mg(2+) binding site.

This sequence belongs to the arthropod phospholipase D family. Class II subfamily. It depends on Mg(2+) as a cofactor. In terms of tissue distribution, expressed by the venom gland.

The protein resides in the secreted. The enzyme catalyses an N-(acyl)-sphingosylphosphocholine = an N-(acyl)-sphingosyl-1,3-cyclic phosphate + choline. It catalyses the reaction an N-(acyl)-sphingosylphosphoethanolamine = an N-(acyl)-sphingosyl-1,3-cyclic phosphate + ethanolamine. It carries out the reaction a 1-acyl-sn-glycero-3-phosphocholine = a 1-acyl-sn-glycero-2,3-cyclic phosphate + choline. The catalysed reaction is a 1-acyl-sn-glycero-3-phosphoethanolamine = a 1-acyl-sn-glycero-2,3-cyclic phosphate + ethanolamine. Its function is as follows. Dermonecrotic toxins cleave the phosphodiester linkage between the phosphate and headgroup of certain phospholipids (sphingolipid and lysolipid substrates), forming an alcohol (often choline) and a cyclic phosphate. This toxin acts on sphingomyelin (SM). It may also act on ceramide phosphoethanolamine (CPE), lysophosphatidylcholine (LPC) and lysophosphatidylethanolamine (LPE), but not on lysophosphatidylserine (LPS), and lysophosphatidylglycerol (LPG). It acts by transphosphatidylation, releasing exclusively cyclic phosphate products as second products. Induces dermonecrosis, hemolysis, increased vascular permeability, edema, inflammatory response, and platelet aggregation. This Loxosceles hirsuta (Recluse spider) protein is Dermonecrotic toxin LhSicTox-alphaIA2biii.